Reading from the N-terminus, the 446-residue chain is Sensor protein PfeS (446 aa).

The Cytoplasmic segment spans residues Met-1–Lys-9. The chain crosses the membrane as a helical span at residues Leu-10–Leu-30. The Periplasmic portion of the chain corresponds to Ser-31 to Thr-155. The helical transmembrane segment at His-156–Tyr-176 threads the bilayer. The 57-residue stretch at Arg-177–Ala-233 folds into the HAMP domain. The Cytoplasmic segment spans residues Arg-177–Ala-446. The 206-residue stretch at Thr-241–Ala-446 folds into the Histidine kinase domain. His-244 carries the phosphohistidine; by autocatalysis modification.

It localises to the cell inner membrane. The enzyme catalyses ATP + protein L-histidine = ADP + protein N-phospho-L-histidine.. In terms of biological role, member of the two-component regulatory system PfeR/PfeS. May activate PfeR by phosphorylation. The protein is Sensor protein PfeS (pfeS) of Pseudomonas aeruginosa (strain ATCC 15692 / DSM 22644 / CIP 104116 / JCM 14847 / LMG 12228 / 1C / PRS 101 / PAO1).